The sequence spans 262 residues: uncharacterized protein (262 aa).

A run of 6 helical transmembrane segments spans residues 7–27, 58–78, 114–134, 140–160, 179–199, and 216–236; these read LAVA…LAHM, DTLG…IVFG, FLAF…VLGG, GGFQ…IAFG, GALG…YYLF, and IITA…VLAG.

Its subcellular location is the cell membrane. This is an uncharacterized protein from Methanocaldococcus jannaschii (strain ATCC 43067 / DSM 2661 / JAL-1 / JCM 10045 / NBRC 100440) (Methanococcus jannaschii).